We begin with the raw amino-acid sequence, 222 residues long: Deoxyribose-phosphate aldolase (222 aa).

Asp91 serves as the catalytic Proton donor/acceptor. Residue Lys153 is the Schiff-base intermediate with acetaldehyde of the active site. The active-site Proton donor/acceptor is Lys182.

It belongs to the DeoC/FbaB aldolase family. DeoC type 1 subfamily.

Its subcellular location is the cytoplasm. It carries out the reaction 2-deoxy-D-ribose 5-phosphate = D-glyceraldehyde 3-phosphate + acetaldehyde. It functions in the pathway carbohydrate degradation; 2-deoxy-D-ribose 1-phosphate degradation; D-glyceraldehyde 3-phosphate and acetaldehyde from 2-deoxy-alpha-D-ribose 1-phosphate: step 2/2. Its function is as follows. Catalyzes a reversible aldol reaction between acetaldehyde and D-glyceraldehyde 3-phosphate to generate 2-deoxy-D-ribose 5-phosphate. The protein is Deoxyribose-phosphate aldolase of Mycoplasma capricolum subsp. capricolum (strain California kid / ATCC 27343 / NCTC 10154).